The following is a 423-amino-acid chain: Tyrosine--tRNA ligase (423 aa).

Tyrosine 35 serves as a coordination point for L-tyrosine. Residues 40 to 49 (PTAPSLHAGH) carry the 'HIGH' region motif. Residues tyrosine 170 and glutamine 174 each contribute to the L-tyrosine site. Positions 230–234 (KFGKS) match the 'KMSKS' region motif. Lysine 233 serves as a coordination point for ATP. An S4 RNA-binding domain is found at 355 to 412 (DLITDLLVATGLSASKGAARRTIAEGGVSVNNMKIDSDEWTPQASDFLHGRWLVLRRG).

The protein belongs to the class-I aminoacyl-tRNA synthetase family. TyrS type 1 subfamily. Homodimer.

The protein localises to the cytoplasm. It catalyses the reaction tRNA(Tyr) + L-tyrosine + ATP = L-tyrosyl-tRNA(Tyr) + AMP + diphosphate + H(+). In terms of biological role, catalyzes the attachment of tyrosine to tRNA(Tyr) in a two-step reaction: tyrosine is first activated by ATP to form Tyr-AMP and then transferred to the acceptor end of tRNA(Tyr). The polypeptide is Tyrosine--tRNA ligase (Mycobacterium sp. (strain KMS)).